The sequence spans 563 residues: Kdo(2)-lipid A phosphoethanolamine 7''-transferase (563 aa).

Residues 1–9 lie on the Cytoplasmic side of the membrane; the sequence is MRYIKSMTQ. A helical transmembrane segment spans residues 10 to 30; the sequence is QKLSFLLALYIGLFMNCAVFY. Over 31-48 the chain is Periplasmic; the sequence is RRFGSYAQEFTIWKGLSA. Residues 49-69 traverse the membrane as a helical segment; sequence VVELGATVLVTFFLLRLLSLF. The Cytoplasmic segment spans residues 70-79; it reads GRRVWRVLAT. The chain crosses the membrane as a helical span at residues 80–100; sequence LVVLFSAGASYYMTFLNVVIG. The Periplasmic portion of the chain corresponds to 101-117; it reads YGIIASVMTTDIDLSKE. Residues 118-138 traverse the membrane as a helical segment; sequence VVGLHFVLWLIAVSVLPLIFI. At 139–159 the chain is on the cytoplasmic side; it reads WSNHCRYTLLRQLRTPGQRFR. A helical membrane pass occupies residues 160–180; it reads SAAVVVLAGVMVWAPIRLLDI. Topologically, residues 181-563 are periplasmic; that stretch reads QQKKVERATG…IPDVQKVAAK (383 aa).

It belongs to the phosphoethanolamine transferase family. EptB subfamily. Requires Ca(2+) as cofactor.

It is found in the cell inner membrane. It carries out the reaction alpha-Kdo-(2-&gt;4)-alpha-Kdo-(2-&gt;6)-lipid A (E. coli) + a 1,2-diacyl-sn-glycero-3-phosphoethanolamine = 7-O-[2-aminoethoxy(hydroxy)phosphoryl]-alpha-Kdo-(2-&gt;4)-alpha-Kdo-(2-&gt;6)-lipid A + a 1,2-diacyl-sn-glycerol. The enzyme catalyses alpha-Kdo-(2-&gt;4)-alpha-Kdo-(2-&gt;6)-lipid IVA (E. coli) + a 1,2-diacyl-sn-glycero-3-phosphoethanolamine = 7-O-[2-aminoethoxy(hydroxy)phosphoryl]-alpha-Kdo-(2-&gt;4)-alpha-Kdo-(2-&gt;6)-lipid IVA (E. coli) + a 1,2-diacyl-sn-glycerol. In terms of biological role, catalyzes the addition of a phosphoethanolamine (pEtN) moiety to the outer 3-deoxy-D-manno-octulosonic acid (Kdo) residue of a Kdo(2)-lipid A. Phosphatidylethanolamines with one unsaturated acyl group function as pEtN donors and the reaction releases diacylglycerol. The polypeptide is Kdo(2)-lipid A phosphoethanolamine 7''-transferase (eptB) (Salmonella typhimurium (strain LT2 / SGSC1412 / ATCC 700720)).